Here is a 347-residue protein sequence, read N- to C-terminus: Isopentenyl-diphosphate delta-isomerase (347 aa).

Arg-5–Lys-6 is a binding site for substrate. FMN-binding positions include Ser-61, Ser-62–Thr-64, Ser-92, and Asn-120. Ser-92 to Arg-94 is a substrate binding site. Substrate is bound at residue Gln-159. Glu-160 serves as a coordination point for Mg(2+). FMN-binding positions include Lys-189, Ser-214, Thr-219, Gly-269 to Arg-271, and Ala-290 to Arg-291.

Belongs to the IPP isomerase type 2 family. Homooctamer. Dimer of tetramers. FMN is required as a cofactor. NADPH serves as cofactor. The cofactor is Mg(2+).

It localises to the cytoplasm. The enzyme catalyses isopentenyl diphosphate = dimethylallyl diphosphate. Involved in the biosynthesis of isoprenoids. Catalyzes the 1,3-allylic rearrangement of the homoallylic substrate isopentenyl (IPP) to its allylic isomer, dimethylallyl diphosphate (DMAPP). This is Isopentenyl-diphosphate delta-isomerase from Thermoplasma volcanium (strain ATCC 51530 / DSM 4299 / JCM 9571 / NBRC 15438 / GSS1).